The following is a 482-amino-acid chain: tRNA sulfurtransferase (482 aa).

The region spanning 61 to 165 (AQYLETLACI…NDELYIISAV (105 aa)) is the THUMP domain. Residues 183–184 (LL), lysine 265, glycine 287, and glutamine 296 each bind ATP. An intrachain disulfide couples cysteine 344 to cysteine 456. The Rhodanese domain maps to 404-482 (LAADEVILDI…GFDNVKVYRP (79 aa)). Cysteine 456 acts as the Cysteine persulfide intermediate in catalysis.

This sequence belongs to the ThiI family.

The protein localises to the cytoplasm. It carries out the reaction [ThiI sulfur-carrier protein]-S-sulfanyl-L-cysteine + a uridine in tRNA + 2 reduced [2Fe-2S]-[ferredoxin] + ATP + H(+) = [ThiI sulfur-carrier protein]-L-cysteine + a 4-thiouridine in tRNA + 2 oxidized [2Fe-2S]-[ferredoxin] + AMP + diphosphate. The catalysed reaction is [ThiS sulfur-carrier protein]-C-terminal Gly-Gly-AMP + S-sulfanyl-L-cysteinyl-[cysteine desulfurase] + AH2 = [ThiS sulfur-carrier protein]-C-terminal-Gly-aminoethanethioate + L-cysteinyl-[cysteine desulfurase] + A + AMP + 2 H(+). The protein operates within cofactor biosynthesis; thiamine diphosphate biosynthesis. Functionally, catalyzes the ATP-dependent transfer of a sulfur to tRNA to produce 4-thiouridine in position 8 of tRNAs, which functions as a near-UV photosensor. Also catalyzes the transfer of sulfur to the sulfur carrier protein ThiS, forming ThiS-thiocarboxylate. This is a step in the synthesis of thiazole, in the thiamine biosynthesis pathway. The sulfur is donated as persulfide by IscS. The chain is tRNA sulfurtransferase from Aeromonas salmonicida (strain A449).